A 301-amino-acid chain; its full sequence is Cytidine deaminase 1 (301 aa).

CMP/dCMP-type deaminase domains are found at residues 23–156 (SVIQ…FGPD) and 188–301 (DSSA…CYEA). Residue 64-66 (NVE) coordinates substrate. His77 serves as a coordination point for Zn(2+). Glu79 serves as the catalytic Proton donor. Zn(2+) contacts are provided by Cys104 and Cys107.

Belongs to the cytidine and deoxycytidylate deaminase family. Homodimer. Requires Zn(2+) as cofactor. In terms of tissue distribution, expressed in roots, rosette leaves, stems and flowers.

The enzyme catalyses cytidine + H2O + H(+) = uridine + NH4(+). It carries out the reaction 2'-deoxycytidine + H2O + H(+) = 2'-deoxyuridine + NH4(+). Its activity is regulated as follows. Inhibited by uridine, CMP and dCMP. Functionally, this enzyme scavenges exogenous and endogenous cytidine and 2'-deoxycytidine for UMP synthesis. Functions as a conventional cytidine deaminase. Has no affinity for RNA and is not involved in RNA-editing by C-to-U deamination. The polypeptide is Cytidine deaminase 1 (CDA1) (Arabidopsis thaliana (Mouse-ear cress)).